The primary structure comprises 309 residues: Olfactory receptor 2AP1 (309 aa).

The Extracellular portion of the chain corresponds to 1–23 (MKNKTVLTEFILLGLTDVPELQV). Residue Asn3 is glycosylated (N-linked (GlcNAc...) asparagine). Residues 24-47 (AVFTFLFLAYLLSILGNLTILILT) form a helical membrane-spanning segment. Over 48–55 (LLDSHLQT) the chain is Cytoplasmic. The chain crosses the membrane as a helical span at residues 56–77 (PMYFFLRNFSFLEISFTNIFIP). The Extracellular segment spans residues 78 to 98 (RVLISITTGNKSISFAGCFTQ). A glycan (N-linked (GlcNAc...) asparagine) is linked at Asn87. Cys95 and Cys187 are joined by a disulfide. A helical transmembrane segment spans residues 99–118 (YFFAMFLGATEFYLLAAMSY). Residues 119 to 137 (DRYVAICKPLHYTTIMSSR) lie on the Cytoplasmic side of the membrane. A helical transmembrane segment spans residues 138–156 (ICIQLIFCSWLGGLMAIIP). The Extracellular portion of the chain corresponds to 157-193 (TITLMSQQDFCASNRLNHYFCDYEPLLELSCSDTSLI). The chain crosses the membrane as a helical span at residues 194–217 (EKVVFLVASVTLVVTLVLVILSYA). Topologically, residues 218-234 (FIIKTILKLPSAQQRTK) are cytoplasmic. The chain crosses the membrane as a helical span at residues 235–257 (AFSTCSSHMIVISLSYGSCMFMY). Over 258–270 (INPSAKEGDTFNK) the chain is Extracellular. The chain crosses the membrane as a helical span at residues 271–290 (GVALLITSVAPLLNPFIYTL). The Cytoplasmic portion of the chain corresponds to 291-309 (RNQQVKQPFKDMVKKLLNL).

It belongs to the G-protein coupled receptor 1 family.

It localises to the cell membrane. In terms of biological role, odorant receptor. This chain is Olfactory receptor 2AP1 (OR2AP1), found in Homo sapiens (Human).